The primary structure comprises 791 residues: Solute carrier family 26 member 9 (791 aa).

The Cytoplasmic portion of the chain corresponds to 1-70 (MSQPRPRYVV…WLPKYKIKDY (70 aa)). The helical transmembrane segment at 71-96 (IIPDLLGGLSGGSIQVPQGMAFALLA) threads the bilayer. Residues 97–99 (NLP) lie on the Extracellular side of the membrane. A helical membrane pass occupies residues 100-117 (AVNGLYSSFFPLLTYFFL). The Cytoplasmic segment spans residues 118 to 128 (GGVHQMVPGTF). The chain crosses the membrane as a helical span at residues 129–142 (AVISILVGNICLQL). At 143–171 (APESKFQVFNNATNESYVDTAAMEAERLH) the chain is on the extracellular side. Residues 172–190 (VSATLACLTAIIQMGLGFM) form a helical membrane-spanning segment. Topologically, residues 191–202 (QFGFVAIYLSES) are cytoplasmic. A helical membrane pass occupies residues 203-224 (FIRGFMTAAGLQILISVLKYIF). Over 225 to 235 (GLTIPSYTGPG) the chain is Extracellular. Residues 236–244 (SIVFTFIDI) constitute an intramembrane region (helical). Residues 245–254 (CKNLPHTNIA) lie on the Extracellular side of the membrane. Residues 255–273 (SLIFALISGAFLVLVKELN) traverse the membrane as a helical segment. Over 274–281 (ARYMHKIR) the chain is Cytoplasmic. The helical transmembrane segment at 282–297 (FPIPTEMIVVVVATAI) threads the bilayer. Residues 298-327 (SGGCKMPKKYHMQIVGEIQRGFPTPVSPVV) are Extracellular-facing. Residues 328–348 (SQWKDMIGTAFSLAIVSYVIN) traverse the membrane as a helical segment. The Cytoplasmic portion of the chain corresponds to 349–366 (LAMGRTLANKHGYDVDSN). The chain crosses the membrane as a helical span at residues 367-382 (QEMIALGCSNFFGSFF). The Extracellular portion of the chain corresponds to 383–390 (KIHVICCA). The helical transmembrane segment at 391 to 400 (LSVTLAVDGA) threads the bilayer. At 401 to 404 (GGKS) the chain is on the cytoplasmic side. Residues 405 to 423 (QVASLCVSLVVMITMLVLG) traverse the membrane as a helical segment. At 424 to 428 (IYLYP) the chain is on the extracellular side. Residues 429-450 (LPKSVLGALIAVNLKNSLKQLT) traverse the membrane as a helical segment. The Cytoplasmic portion of the chain corresponds to 451–464 (DPYYLWRKSKLDCC). Residues 465–476 (IWVVSFLSSFFL) form a helical membrane-spanning segment. Ser-477 is a topological domain (extracellular). A helical transmembrane segment spans residues 478-489 (LPYGVAVGVAFS). Over 490–791 (VLVVVFQTQF…MFHAETLTAL (302 aa)) the chain is Cytoplasmic. The STAS domain occupies 519–737 (TYNRAQDIQG…PSIHDAVLFA (219 aa)). Residues 602 to 650 (FENAPPTDPNNNQTPANGTSVSYITFSPDSSSPAQSEPPASAEAPGEPS) are disordered. Polar residues predominate over residues 610-626 (PNNNQTPANGTSVSYIT). Residues 628–650 (SPDSSSPAQSEPPASAEAPGEPS) are compositionally biased toward low complexity.

It belongs to the SLC26A/SulP transporter (TC 2.A.53) family. In terms of assembly, homodimer. Predominantly expressed in lung at the luminal side of the bronchiolar and alveolar epithelium of lung. To a lower extent, also expressed in pancreas and prostate.

The protein localises to the cell membrane. It localises to the endomembrane system. It catalyses the reaction chloride(in) = chloride(out). The enzyme catalyses hydrogencarbonate(in) + chloride(out) = hydrogencarbonate(out) + chloride(in). With respect to regulation, inhibited by ammonium and thiosulfate. Functionally, ion transporter that can act both as an ion channel and anion exchanger. Mainly acts as a chloride channel, which mediate uncoupled chloride anion transport in an alternate-access mechanism where a saturable binding site is alternately exposed to either one or the other side of the membrane. Also acts as a DIDS- and thiosulfate- sensitive anion exchanger the exchange of chloride for bicarbonate ions across the cell membrane. This chain is Solute carrier family 26 member 9, found in Homo sapiens (Human).